The chain runs to 233 residues: MKAISVLSGGLDSLVTSMVAKKENSEIATVTFNYGQMALDKELKSAKKISKVLGAENQVFDISFVKEFSKSGLNTGNIPNPKKDDLDDFKESEKTMKSVWVPARNMIMFSIASGFAEGINAEKIYSGLNKEEGVTFPDNSTEFINSFNKSLEYGTLNKVKMYAPLYNLDKVEIATFGKRLEDELGLDILKYSYSCYRDNLKDYLHCGTCESCMRRKRAFESAGIVDPTNYILQ.

7–17 contacts ATP; sequence LSGGLDSLVTS. Zn(2+) is bound by residues C195, C206, C209, and C212.

The protein belongs to the QueC family. Requires Zn(2+) as cofactor.

It carries out the reaction 7-carboxy-7-deazaguanine + NH4(+) + ATP = 7-cyano-7-deazaguanine + ADP + phosphate + H2O + H(+). It participates in purine metabolism; 7-cyano-7-deazaguanine biosynthesis. Catalyzes the ATP-dependent conversion of 7-carboxy-7-deazaguanine (CDG) to 7-cyano-7-deazaguanine (preQ(0)). This Methanococcus vannielii (strain ATCC 35089 / DSM 1224 / JCM 13029 / OCM 148 / SB) protein is 7-cyano-7-deazaguanine synthase.